A 258-amino-acid polypeptide reads, in one-letter code: 5'-nucleotidase SurE (258 aa).

Residues Asp-8, Asp-9, Ser-39, and Asn-95 each contribute to the a divalent metal cation site.

This sequence belongs to the SurE nucleotidase family. A divalent metal cation serves as cofactor.

Its subcellular location is the cytoplasm. It catalyses the reaction a ribonucleoside 5'-phosphate + H2O = a ribonucleoside + phosphate. Nucleotidase that shows phosphatase activity on nucleoside 5'-monophosphates. This is 5'-nucleotidase SurE from Methanobrevibacter smithii (strain ATCC 35061 / DSM 861 / OCM 144 / PS).